A 180-amino-acid chain; its full sequence is Type-1 fimbrial protein subunit (180 aa).

Positions 1 to 22 are cleaved as a signal peptide; the sequence is MKKVLLPLAALVLSATASNAMA. Residues cysteine 38 and cysteine 78 are joined by a disulfide bond.

It belongs to the fimbrial protein family.

It localises to the fimbrium. Functionally, fimbriae (also called pili), polar filaments radiating from the surface of the bacterium to a length of 0.5-1.5 micrometers and numbering 100-300 per cell, enable bacteria to colonize the epithelium of specific host organs. The polypeptide is Type-1 fimbrial protein subunit (fimA) (Serratia marcescens).